Here is a 269-residue protein sequence, read N- to C-terminus: Imidazole glycerol phosphate synthase subunit HisF (269 aa).

Residues D23 and D142 contribute to the active site.

It belongs to the HisA/HisF family. Heterodimer of HisH and HisF.

Its subcellular location is the cytoplasm. It catalyses the reaction 5-[(5-phospho-1-deoxy-D-ribulos-1-ylimino)methylamino]-1-(5-phospho-beta-D-ribosyl)imidazole-4-carboxamide + L-glutamine = D-erythro-1-(imidazol-4-yl)glycerol 3-phosphate + 5-amino-1-(5-phospho-beta-D-ribosyl)imidazole-4-carboxamide + L-glutamate + H(+). Its pathway is amino-acid biosynthesis; L-histidine biosynthesis; L-histidine from 5-phospho-alpha-D-ribose 1-diphosphate: step 5/9. Functionally, IGPS catalyzes the conversion of PRFAR and glutamine to IGP, AICAR and glutamate. The HisF subunit catalyzes the cyclization activity that produces IGP and AICAR from PRFAR using the ammonia provided by the HisH subunit. This chain is Imidazole glycerol phosphate synthase subunit HisF, found in Bordetella parapertussis (strain 12822 / ATCC BAA-587 / NCTC 13253).